The chain runs to 428 residues: MATQLIDLAQQTRAAAQKLGTLSLAQRNDALAKVAQALAANQAKIVAANQADCEAAQRDGIAPALYARLKLGESKLQGAIAGIHDVINLPDPVGHLQLHRELDQDLVLKRVTCPLGVLGIIFEARPEALIQITSLAIKSGNGVILKGGKEAIQSCTVLTEIIQTALQDTAVSPQAVTLLTTREEIKTLLSLDQYVDLIIPRGSNAFVQYVQQNTTIPVLGHADGVCHLYVDVAADLSKTIPIVVDAKTQYPAACNAVETLLIHEKIAPEFLPQIAAALTAKQVTLRGDAATQKIMPVQPATAEDWRTEYSDLVLAIKIVPDVEAAIAHINTYGSKHTDGIITEDAATAQIFLNEVKAAGVYHNCSTRFADGFRYGFGAEVGISTQTLPPRGPVGLEGLVTYKYHLVGNGQIAATYSGPDAKPFTHRDL.

This sequence belongs to the gamma-glutamyl phosphate reductase family.

The protein resides in the cytoplasm. The catalysed reaction is L-glutamate 5-semialdehyde + phosphate + NADP(+) = L-glutamyl 5-phosphate + NADPH + H(+). It participates in amino-acid biosynthesis; L-proline biosynthesis; L-glutamate 5-semialdehyde from L-glutamate: step 2/2. Its function is as follows. Catalyzes the NADPH-dependent reduction of L-glutamate 5-phosphate into L-glutamate 5-semialdehyde and phosphate. The product spontaneously undergoes cyclization to form 1-pyrroline-5-carboxylate. This chain is Gamma-glutamyl phosphate reductase, found in Picosynechococcus sp. (strain ATCC 27264 / PCC 7002 / PR-6) (Agmenellum quadruplicatum).